Consider the following 429-residue polypeptide: 3-phosphoshikimate 1-carboxyvinyltransferase (429 aa).

3 residues coordinate 3-phosphoshikimate: Lys-23, Ser-24, and Arg-28. Lys-23 contributes to the phosphoenolpyruvate binding site. 2 residues coordinate phosphoenolpyruvate: Gly-97 and Arg-125. The 3-phosphoshikimate site is built by Ser-170, Ser-171, Gln-172, Ser-198, Asp-314, Asn-338, and Lys-342. Gln-172 lines the phosphoenolpyruvate pocket. Asp-314 functions as the Proton acceptor in the catalytic mechanism. Residues Arg-346, Arg-388, and Lys-413 each contribute to the phosphoenolpyruvate site.

Belongs to the EPSP synthase family. In terms of assembly, monomer.

It is found in the cytoplasm. The enzyme catalyses 3-phosphoshikimate + phosphoenolpyruvate = 5-O-(1-carboxyvinyl)-3-phosphoshikimate + phosphate. Its pathway is metabolic intermediate biosynthesis; chorismate biosynthesis; chorismate from D-erythrose 4-phosphate and phosphoenolpyruvate: step 6/7. Functionally, catalyzes the transfer of the enolpyruvyl moiety of phosphoenolpyruvate (PEP) to the 5-hydroxyl of shikimate-3-phosphate (S3P) to produce enolpyruvyl shikimate-3-phosphate and inorganic phosphate. In Pectobacterium atrosepticum (strain SCRI 1043 / ATCC BAA-672) (Erwinia carotovora subsp. atroseptica), this protein is 3-phosphoshikimate 1-carboxyvinyltransferase.